The chain runs to 315 residues: Olfactory receptor 5AN6 (315 aa).

At 1-29 (MPGGRNSTVITKFILVGFSDFPKLKLVLF) the chain is on the extracellular side. A helical membrane pass occupies residues 30 to 50 (VIFLGSYLSTVVWNLGLIILI). Over 51–54 (RIDP) the chain is Cytoplasmic. A helical membrane pass occupies residues 55–75 (YLHTPMYFFLSNLSFLDFCYI). At 76–99 (SSTTPKMLSGFFQKSKSISFVGCT) the chain is on the extracellular side. A disulfide bridge links C98 with C180. The helical transmembrane segment at 100 to 120 (MQYFIFSSLGLSECCLLAAMA) threads the bilayer. Residues 121 to 123 (YDR) are Cytoplasmic-facing. A helical membrane pass occupies residues 124 to 143 (YAAICNPLLYTAIMSPSLCV). Position 144 (H144) is a topological domain, extracellular. A helical membrane pass occupies residues 145 to 165 (MVVGAYSTGLLGSLIQLCAIL). At 166 to 202 (QLHFCGPNIINHFFCDLPQLLVLSCSETFPLQVLKFV) the chain is on the cytoplasmic side. The chain crosses the membrane as a helical span at residues 203 to 223 (IAVIFGVASVIVILISYGYII). The Extracellular portion of the chain corresponds to 224 to 240 (GTILNISSVEGRSKAFN). A helical transmembrane segment spans residues 241–261 (TCASHLTAVTLFFGSGLFVYM). The Cytoplasmic portion of the chain corresponds to 262-272 (RPSSNSSQGYD). The chain crosses the membrane as a helical span at residues 273 to 293 (KMASVFYTVVIPMLNPLIYSL). Over 294–315 (RNKEIKDALQRCKNKCFSQCHC) the chain is Extracellular.

Belongs to the G-protein coupled receptor 1 family. As to expression, localized in the dorsomedial and ventral region of the olfactory bulb.

The protein resides in the cell membrane. In terms of biological role, odorant receptor specific for muscone. Muscone-binding causes a conformation change that triggers signaling via G(s)-class of G alpha protein GNAL, activating adenylyl cyclase. The protein is Olfactory receptor 5AN6 of Mus musculus (Mouse).